We begin with the raw amino-acid sequence, 199 residues long: IMP cyclohydrolase (199 aa).

It belongs to the archaeal IMP cyclohydrolase family.

The catalysed reaction is IMP + H2O = 5-formamido-1-(5-phospho-D-ribosyl)imidazole-4-carboxamide. The protein operates within purine metabolism; IMP biosynthesis via de novo pathway; IMP from 5-formamido-1-(5-phospho-D-ribosyl)imidazole-4-carboxamide: step 1/1. Its function is as follows. Catalyzes the cyclization of 5-formylamidoimidazole-4-carboxamide ribonucleotide to IMP. This chain is IMP cyclohydrolase, found in Methanothrix thermoacetophila (strain DSM 6194 / JCM 14653 / NBRC 101360 / PT) (Methanosaeta thermophila).